Consider the following 178-residue polypeptide: Mediator of RNA polymerase II transcription subunit 21 (178 aa).

Positions 36-91 (DDDDVNSYSNMAANAPLPQSQQQRQQQKKQQEPQQEIEQPQQQSNPESKSISPPKE) are disordered. Low complexity predominate over residues 67–85 (EPQQEIEQPQQQSNPESKS). Residues 128–169 (NEQMNLINELSDKLQAIEEERIQKIKEKDNLLNLLESMIKEV) adopt a coiled-coil conformation.

Belongs to the Mediator complex subunit 21 family. Component of the Mediator complex.

It is found in the nucleus. In terms of biological role, component of the Mediator complex, a coactivator involved in the regulated transcription of nearly all RNA polymerase II-dependent genes. Mediator functions as a bridge to convey information from gene-specific regulatory proteins to the basal RNA polymerase II transcription machinery. Mediator is recruited to promoters by direct interactions with regulatory proteins and serves as a scaffold for the assembly of a functional preinitiation complex with RNA polymerase II and the general transcription factors. This Candida albicans (strain SC5314 / ATCC MYA-2876) (Yeast) protein is Mediator of RNA polymerase II transcription subunit 21 (SRB7).